The chain runs to 1197 residues: Neural cell adhesion molecule L1.1 (1197 aa).

Ig-like C2-type domains are found at residues 1–58 (EFRQ…TAVS), 69–160 (PSLA…EPMS), 165–263 (PSNS…YTVT), 268–355 (PYWT…THVH), and 360–442 (PAQI…KSIS). The Extracellular portion of the chain corresponds to 1 to 1054 (EFRQRDPSPS…SPRNFATEGW (1054 aa)). An intrachain disulfide couples C92 to C143. 8 N-linked (GlcNAc...) asparagine glycosylation sites follow: N135, N149, N221, N298, N414, N421, N438, and N449. 3 disulfide bridges follow: C199–C247, C289–C339, and C383–C432. The region spanning 451-541 (TKIVGPPQNL…DSDTASGYIT (91 aa)) is the Ig-like C2-type 6 domain. Cysteines 472 and 525 form a disulfide. 5 Fibronectin type-III domains span residues 548-643 (PPQS…TPAA), 645-742 (PDTN…SGED), 747-852 (APSA…TPEG), 853-952 (APGP…LLDG), and 953-1048 (EPPS…SPRN). Positions 630 to 640 (APTESSLSYST) are enriched in polar residues. The interval 630 to 655 (APTESSLSYSTPAAKPDTNPENVMTL) is disordered. Residue N708 is glycosylated (N-linked (GlcNAc...) asparagine). Residues N959, N968, N1002, and N1027 are each glycosylated (N-linked (GlcNAc...) asparagine). Residues 1055 to 1075 (FIGLISALVLLLLVLLLLCYI) form a helical membrane-spanning segment. At 1076–1197 (KKSKGGKYSV…TSVTGILGPN (122 aa)) the chain is on the cytoplasmic side. 2 disordered regions span residues 1115-1135 (MEKC…SNDS) and 1154-1197 (IGQY…LGPN).

It belongs to the immunoglobulin superfamily. L1/neurofascin/NgCAM family. In terms of tissue distribution, expressed in postmitotic neurons in 16-36 hours embryos, including those in the brain, cranial ganglia and otic and olfactory placodes, and in all classes of spinal neurons.

The protein resides in the cell membrane. It is found in the cell projection. It localises to the growth cone. Its function is as follows. Cell adhesion molecule with an important role in the development of the nervous system. Involved in neuron-neuron adhesion, neurite fasciculation, outgrowth of neurites, etc. Binds to axonin on neurons. The sequence is that of Neural cell adhesion molecule L1.1 (nadl1.1) from Danio rerio (Zebrafish).